Consider the following 615-residue polypeptide: MIKKVSLMTALSVTAFSGWAQDSADSLVVTANRFEQPANTVLAPTSVVTREDIERWQSTTVLDVMRRLPGVDTAQNGGMGQASSLFVRGTNSSHVLILVDGIRLNQAGVTGSSDLSQFPISLVQRIEYIRGPRSAVYGSDAIGGVVNIITTRAKDGTTLNAGVGSHGYQNYGGSTQQTLGDNTRVTLAGDYTYTKGFDVVADGNNGGLAQTDRDGYMNKTIYGALEHAFSDQWSGFVRGFGYSNRTAYDAYYSSFTPDVLVDTRQLYSQTWDTGLRFNDGIFHSQLLSSYSHSKDYNYDPHLGRYDSTATLDEIKQYNVQWTNSVDVGHGNVGAGVDWQKQSTEPGTNYVTNDTNLRNTGVYLTALQKFGDFTLEGAARSDDNSQFGRHGTWQSSAAWEFIEGYRFIASYGTAYKAPNLGQLYGFYGNDHLNPEESKQWEGAFEGLTAGVSWRVSAYRNDVDNLIDFDSNLQQYYNVGKARIKGVEATASFDTGPLTHTVGYDYVDARNAATNELLDRRAKQQVKYQLDTQVYDFDWSLTYHYLGTRYDTDFGSYPYQKVKMGGVSLWDLAVSYPVTSHLTVRGKIANLFDKDYETVYGYETAGREYTLSGSYTF.

Positions 1-20 (MIKKVSLMTALSVTAFSGWA) are cleaved as a signal peptide. Residues 25-32 (DSLVVTAN) carry the TonB box motif. Residues 37–151 (PANTVLAPTS…IGGVVNIITT (115 aa)) enclose the TBDR plug domain. Residues S84, N91, and 109–110 (VT) contribute to the cyanocob(III)alamin site. In terms of domain architecture, TBDR beta-barrel spans 154–615 (KDGTTLNAGV…EYTLSGSYTF (462 aa)). 3 consecutive transmembrane segments (beta stranded) span residues 157 to 164 (TTLNAGVG), 168 to 177 (YQNYGGSTQQ), and 183 to 194 (TRVTLAGDYTYT). 4 residues coordinate Ca(2+): D198, Q210, D212, and D214. A run of 2 beta stranded transmembrane segments spans residues 216–226 (YMNKTIYGALE) and 231–247 (DQWS…NRTA). The Ca(2+) site is built by Y248 and D249. A250 provides a ligand contact to cyanocob(III)alamin. Ca(2+) is bound at residue D262. Transmembrane regions (beta stranded) follow at residues 264–278 (RQLY…LRFN), 280–297 (GIFH…KDYN), 310–326 (TLDE…NSVD), 329–338 (HGNVGAGVDW), 354–370 (TNLR…QKFG), 372–382 (FTLEGAARSDD), 386–401 (FGRH…WEFI), 404–418 (YRFI…KAPN), 435–444 (ESKQWEGAFE), 450–459 (VSWRVSAYRN), 474–491 (YYNV…TASF), 495–510 (PLTH…ARNA), 518–530 (RRAK…QLDT), 536–551 (DWSL…YDTD), 559–573 (KVKM…LAVS), 586–597 (IANLFDKDYETV), and 603–615 (AGRE…SYTF). Residue T310 coordinates cyanocob(III)alamin. A cyanocob(III)alamin-binding site is contributed by R518. Residues 598-615 (YGYETAGREYTLSGSYTF) carry the TonB C-terminal box motif.

It belongs to the TonB-dependent receptor family. BtuB (TC 1.B.14.3.1) subfamily.

It is found in the cell outer membrane. Involved in the active translocation of vitamin B12 (cyanocobalamin) across the outer membrane to the periplasmic space. It derives its energy for transport by interacting with the trans-periplasmic membrane protein TonB. The chain is Vitamin B12 transporter BtuB from Enterobacter sp. (strain 638).